A 595-amino-acid chain; its full sequence is Thiol:disulfide interchange protein DsbD (595 aa).

Positions 1-24 are cleaved as a signal peptide; sequence MAQRFITLILLLCSVLLAPHSAQS. Cysteine 134 and cysteine 140 are oxidised to a cystine. The tract at residues 166–186 is disordered; sequence NSSATVNPPATTQPEGDATPV. 9 consecutive transmembrane segments (helical) span residues 197-217, 233-253, 270-290, 311-331, 332-352, 353-373, 384-404, 411-431, and 435-455; these read ALLI…YPLI, ILIL…LLGL, YVLI…FGLY, GGSL…CSPC, TTAP…MLAG, GGTL…VTLF, WMQY…VFLL, VWGL…AFVL, and AHAG…LIVA. Residues cysteine 209 and cysteine 331 are joined by a disulfide bond. In terms of domain architecture, Thioredoxin spans 452-592; sequence LIVARPLQDW…FLQHLQNTPA (141 aa). Residues cysteine 507 and cysteine 510 are joined by a disulfide bond.

Belongs to the thioredoxin family. DsbD subfamily.

Its subcellular location is the cell inner membrane. It carries out the reaction [protein]-dithiol + NAD(+) = [protein]-disulfide + NADH + H(+). It catalyses the reaction [protein]-dithiol + NADP(+) = [protein]-disulfide + NADPH + H(+). Its function is as follows. Required to facilitate the formation of correct disulfide bonds in some periplasmic proteins and for the assembly of the periplasmic c-type cytochromes. Acts by transferring electrons from cytoplasmic thioredoxin to the periplasm. This transfer involves a cascade of disulfide bond formation and reduction steps. In Yersinia pestis bv. Antiqua (strain Nepal516), this protein is Thiol:disulfide interchange protein DsbD.